A 308-amino-acid polypeptide reads, in one-letter code: Formamidopyrimidine-DNA glycosylase (308 aa).

Proline 2 (schiff-base intermediate with DNA) is an active-site residue. Glutamate 3 acts as the Proton donor in catalysis. Lysine 61 (proton donor; for beta-elimination activity) is an active-site residue. 3 residues coordinate DNA: histidine 100, arginine 120, and arginine 181. Residues 267–301 (AVYGQEGRPCPRCGALVRRDAFMNRSSFSCPVCQP) form an FPG-type zinc finger. Catalysis depends on arginine 291, which acts as the Proton donor; for delta-elimination activity.

This sequence belongs to the FPG family. In terms of assembly, monomer. The cofactor is Zn(2+).

The catalysed reaction is Hydrolysis of DNA containing ring-opened 7-methylguanine residues, releasing 2,6-diamino-4-hydroxy-5-(N-methyl)formamidopyrimidine.. The enzyme catalyses 2'-deoxyribonucleotide-(2'-deoxyribose 5'-phosphate)-2'-deoxyribonucleotide-DNA = a 3'-end 2'-deoxyribonucleotide-(2,3-dehydro-2,3-deoxyribose 5'-phosphate)-DNA + a 5'-end 5'-phospho-2'-deoxyribonucleoside-DNA + H(+). Involved in base excision repair of DNA damaged by oxidation or by mutagenic agents. Acts as a DNA glycosylase that recognizes and removes damaged bases. Has a preference for oxidized purines, such as 7,8-dihydro-8-oxoguanine (8-oxoG). Has AP (apurinic/apyrimidinic) lyase activity and introduces nicks in the DNA strand. Cleaves the DNA backbone by beta-delta elimination to generate a single-strand break at the site of the removed base with both 3'- and 5'-phosphates. In Kineococcus radiotolerans (strain ATCC BAA-149 / DSM 14245 / SRS30216), this protein is Formamidopyrimidine-DNA glycosylase.